The chain runs to 148 residues: FAD synthase (148 aa).

ATP contacts are provided by residues 14 to 15 (TF), 19 to 22 (HPGH), and Asp97.

It belongs to the archaeal FAD synthase family. In terms of assembly, homodimer. A divalent metal cation is required as a cofactor.

The catalysed reaction is FMN + ATP + H(+) = FAD + diphosphate. It functions in the pathway cofactor biosynthesis; FAD biosynthesis; FAD from FMN: step 1/1. Its function is as follows. Catalyzes the transfer of the AMP portion of ATP to flavin mononucleotide (FMN) to produce flavin adenine dinucleotide (FAD) coenzyme. In Natrialba magadii (strain ATCC 43099 / DSM 3394 / CCM 3739 / CIP 104546 / IAM 13178 / JCM 8861 / NBRC 102185 / NCIMB 2190 / MS3) (Natronobacterium magadii), this protein is FAD synthase.